A 396-amino-acid polypeptide reads, in one-letter code: Purine ribonucleoside efflux pump NepI (396 aa).

At 1-21 the chain is on the cytoplasmic side; sequence MSEFIAENRGADAITRPNWSA. Residues 22–42 form a helical membrane-spanning segment; the sequence is VFSVAFCVACLIIVEFLPVSL. Topologically, residues 43-54 are periplasmic; the sequence is LTPMAQDLGISE. A helical transmembrane segment spans residues 55–75; that stretch reads GVAGQSVTVTAFVAMFASLFI. Residues 76 to 85 are Cytoplasmic-facing; the sequence is TQTIQATDRR. Residues 86 to 106 form a helical membrane-spanning segment; that stretch reads YVVILFAVLLTLSCLLVSFAN. Position 107 (Ser107) is a topological domain, periplasmic. The helical transmembrane segment at 108-128 threads the bilayer; that stretch reads FSLLLIGRACLGLALGGFWAI. Topologically, residues 129-147 are cytoplasmic; the sequence is SASLTMRLVPPRTVPKALS. A helical transmembrane segment spans residues 148–168; the sequence is VIFGAVSIALVIAAPLGGFLG. Over 169-175 the chain is Periplasmic; sequence ELIGWRN. Residues 176–196 traverse the membrane as a helical segment; the sequence is VFNAAAAMGVLCIFWIIKSLP. The Cytoplasmic segment spans residues 197 to 215; it reads SLPGEPSHQKQNTFRLLQR. A helical transmembrane segment spans residues 216–236; the sequence is PGVMAGMIAIFMSFAGQFAFF. At 237 to 255 the chain is on the periplasmic side; the sequence is TYIRPVYMNLAGFGVDGLT. A helical membrane pass occupies residues 256-276; it reads LVLLSFGIASFVGTSLSSFIL. Topologically, residues 277–281 are cytoplasmic; that stretch reads KRSVK. Residues 282–302 form a helical membrane-spanning segment; it reads LALAGAPFVLALSALVLTLWG. Residues 303–305 are Periplasmic-facing; that stretch reads SDK. A helical transmembrane segment spans residues 306–326; the sequence is IVATGVAIIWGLTFALIPVGW. The Cytoplasmic portion of the chain corresponds to 327 to 343; sequence STWITRSLADQAEKAGS. The chain crosses the membrane as a helical span at residues 344–364; that stretch reads IQVAVIQLANTCGAAIGGYAL. The Periplasmic portion of the chain corresponds to 365–366; it reads DN. The chain crosses the membrane as a helical span at residues 367–387; that stretch reads IGLTSPLMLSGTLMLLTALLV. Residues 388 to 396 are Cytoplasmic-facing; the sequence is TAKVKMKKS.

The protein belongs to the major facilitator superfamily. DHA1 family. NepI (TC 2.A.1.2.26) subfamily.

The protein resides in the cell inner membrane. The enzyme catalyses inosine(in) + H(+)(out) = inosine(out) + H(+)(in). It carries out the reaction guanosine(in) + H(+)(out) = guanosine(out) + H(+)(in). Its function is as follows. Involved in the efflux of purine ribonucleosides, such as inosine and guanosine. The chain is Purine ribonucleoside efflux pump NepI from Escherichia coli O127:H6 (strain E2348/69 / EPEC).